The chain runs to 1181 residues: HEAT repeat-containing protein 6 (1181 aa).

The HEAT 1 repeat unit spans residues 159 to 198 (PELLGNTGLLMKLSDLAQSDPEVRRAAVHCMANLCLSVPG). Disordered regions lie at residues 292-347 (QYDG…PVTG) and 371-390 (LDGS…SSSS). Over residues 300 to 312 (KPQQSESSASRPT) the composition is skewed to polar residues. Residues 313–325 (LNKKKKSKVKPKK) are compositionally biased toward basic residues. Phosphoserine occurs at positions 336 and 337. 2 positions are modified to phosphoserine: S399 and S402. 3 HEAT repeats span residues 452 to 490 (ELGS…GSKQ), 515 to 552 (SIRE…NAPY), and 558 to 595 (SLLT…THAP). The disordered stretch occupies residues 613–646 (NSNSATPHLSPPDWWKKAPAGPSLEETSVSSPKG). Residue T618 is modified to Phosphothreonine. Over residues 637 to 646 (EETSVSSPKG) the composition is skewed to polar residues. S643 carries the phosphoserine modification.

As to expression, amplified in breast cancer cell lines MCF-7 and BT-474.

In terms of biological role, amplification-dependent oncogene. In Homo sapiens (Human), this protein is HEAT repeat-containing protein 6 (HEATR6).